The primary structure comprises 1487 residues: Collagen alpha-1(II) chain (1487 aa).

An N-terminal signal peptide occupies residues 1-25 (MIRLGAPQTLVLLTLLVAAVLRCHG). The propeptide at 26–181 (QDVQKAGSCV…PPGLGGNFAA (156 aa)) is N-terminal propeptide. Residues 32-90 (GSCVQDGQRYNDKDVWKPEPCRICVCDTGTVLCDDIICEDMKDCLSPETPFGECCPICS) enclose the VWFC domain. Residues 96–1234 (ASGQPGPKGQ…GLGQREKGPD (1139 aa)) are disordered. 2 stretches are compositionally biased toward basic and acidic residues: residues 105 to 116 (QKGEPGDIKDIV) and 133 to 154 (PRGD…RDGE). The segment covering 158 to 173 (PGNPGPPGPPGPPGPP) has biased composition (pro residues). K190 is modified (5-hydroxylysine). A glycan (O-linked (Gal...) hydroxylysine) is linked at K190. The segment covering 192–203 (GGAQMGVMQGPM) has biased composition (low complexity). The segment at 201–1214 (GPMGPMGPRG…PGPPGPPGPP (1014 aa)) is triple-helical region. A compositionally biased stretch (pro residues) spans 208 to 217 (PRGPPGPAGA). Residues P212, P218, P230, P233, P245, P248, P251, P260, P269, P278, P281, and P284 each carry the hydroxyproline modification. Over residues 218–239 (PGPQGFQGNPGEPGEPGVSGPM) the composition is skewed to low complexity. Over residues 241 to 250 (PRGPPGPPGK) the composition is skewed to pro residues. Basic and acidic residues predominate over residues 251 to 265 (PGDDGEAGKPGKSGE). A 5-hydroxylysine modification is found at K287. K287 carries an O-linked (Gal...) hydroxylysine glycan. P293 bears the Hydroxyproline mark. K299 is modified (5-hydroxylysine). K299 carries O-linked (Gal...) hydroxylysine glycosylation. P305 bears the Hydroxyproline mark. Residue K308 is modified to 5-hydroxylysine. K308 carries O-linked (Gal...) hydroxylysine glycosylation. Positions 310–320 (ESGSPGENGSP) are enriched in low complexity. P314, P320, P329, P350, P356, P365, P368, and P371 each carry hydroxyproline. Positions 335 to 350 (TGPAGAAGARGNDGQP) are enriched in low complexity. Over residues 360 to 369 (GPAGGPGFPG) the composition is skewed to gly residues. 2 stretches are compositionally biased toward low complexity: residues 370 to 382 (APGA…PTGA) and 391 to 431 (PRGE…AGAP). The residue at position 374 (K374) is a 5-hydroxylysine. O-linked (Gal...) hydroxylysine glycosylation is present at K374. P395, P398, P401, P410, and P416 each carry hydroxyproline. At K419 the chain carries 5-hydroxylysine. 4 positions are modified to hydroxyproline: P425, P431, P434, and P440. The span at 433–442 (FPGPRGPPGP) shows a compositional bias: pro residues. 5-hydroxylysine is present on K452. P458 carries the hydroxyproline modification. K464 and K470 each carry 5-hydroxylysine. 6 positions are modified to hydroxyproline: P473, P482, P497, P506, P512, and P518. 5-hydroxylysine is present on K527. Residue P530 is modified to Hydroxyproline. Position 542 is a 5-hydroxylysine (K542). A hydroxyproline mark is found at P551, P557, P566, P581, P587, P590, P599, and P605. K608 is subject to 5-hydroxylysine. O-linked (Gal...) hydroxylysine glycosylation is present at K608. P614 is modified (hydroxyproline). K620 is modified (5-hydroxylysine). K620 carries an O-linked (Gal...) hydroxylysine glycan. Residues 622–631 (LPGAPGLRGL) show a composition bias toward low complexity. A hydroxyproline mark is found at P623, P626, P632, P644, P659, and P668. Residues 656–667 (QGAPGPSGFQGL) show a composition bias toward low complexity. P670 carries the 3-hydroxyproline modification. A hydroxyproline mark is found at P671 and P674. Positions 721-736 (LPGTPGTDGPKGAAGP) are enriched in low complexity. Over residues 764-775 (KGDRGDVGEKGP) the composition is skewed to basic and acidic residues. 2 stretches are compositionally biased toward low complexity: residues 833-848 (AGFA…PGAK) and 877-913 (PTGV…SNGN). P907 is modified (3-hydroxyproline). Residues P908, P914, and P920 each carry the 4-hydroxyproline modification. Over residues 1069 to 1079 (APGPPGSPGPA) the composition is skewed to pro residues. A compositionally biased stretch (low complexity) spans 1091–1109 (AGAQGPMGPAGPAGARGMP). Residues 1115-1129 (RGDKGETGEAGERGL) show a composition bias toward basic and acidic residues. Position 1130 is a 5-hydroxylysine (K1130). The O-linked (Gal...) hydroxylysine glycan is linked to K1130. P1144 is subject to 3-hydroxyproline. The segment covering 1148 to 1157 (SGDQGASGPA) has biased composition (low complexity). P1181 carries the post-translational modification 4-hydroxyproline. 3-hydroxyproline is present on P1186. Residue P1187 is modified to 4-hydroxyproline. Pro residues predominate over residues 1199-1216 (AGPPGNPGPPGPPGPPGP). The residue at position 1201 (P1201) is a 3-hydroxyproline. 4-hydroxyproline occurs at positions 1202 and 1205. At P1207 the chain carries 3-hydroxyproline. 2 positions are modified to 4-hydroxyproline: P1208 and P1211. P1213 carries the post-translational modification 3-hydroxyproline. A 4-hydroxyproline modification is found at P1214. The segment at 1215–1241 (GPGIDMSAFAGLGQREKGPDPLQYMRA) is nonhelical region (C-terminal). The 235-residue stretch at 1253 to 1487 (AEVDATLKSL…GVDIGPVCFL (235 aa)) folds into the Fibrillar collagen NC1 domain. Disulfide bonds link C1283–C1315, C1323–C1485, and C1393–C1438. Residues D1301, N1303, Q1304, C1306, and D1309 each coordinate Ca(2+). N1388 carries an N-linked (GlcNAc...) asparagine glycan.

Belongs to the fibrillar collagen family. As to quaternary structure, homotrimers of alpha 1(II) chains. Post-translationally, probably 3-hydroxylated on prolines by LEPREL1. Proline residues at the third position of the tripeptide repeating unit (G-X-P) are hydroxylated in some or all of the chains. Proline residues at the second position of the tripeptide repeating unit (G-P-X) are hydroxylated in some of the chains. O-linked glycans consist of Glc-Gal disaccharides bound to the oxygen atom of post-translationally added hydroxyl groups. In terms of processing, contains mostly 4-hydroxyproline. Prolines at the third position of the tripeptide repeating unit (G-X-P) are 4-hydroxylated in some or all of the chains. Post-translationally, contains 3-hydroxyproline at a few sites. This modification occurs on the first proline residue in the sequence motif Gly-Pro-Hyp, where Hyp is 4-hydroxyproline. Lysine residues at the third position of the tripeptide repeating unit (G-X-Y) are 5-hydroxylated in some or all of the chains. In terms of processing, O-glycosylated on hydroxylated lysine residues. The O-linked glycan consists of a Glc-Gal disaccharide.

The protein resides in the secreted. The protein localises to the extracellular space. Its subcellular location is the extracellular matrix. Functionally, type II collagen is specific for cartilaginous tissues. It is essential for the normal embryonic development of the skeleton, for linear growth and for the ability of cartilage to resist compressive forces. This chain is Collagen alpha-1(II) chain, found in Bos taurus (Bovine).